The sequence spans 1098 residues: Probable arabinosyltransferase B (1098 aa).

Helical transmembrane passes span 28 to 50, 217 to 239, 271 to 293, 402 to 419, 434 to 456, 472 to 494, 541 to 558, 570 to 587, 597 to 619, 626 to 648, 663 to 685, and 698 to 720; these read WVAT…LPVV, LKLL…LWRL, ASWR…WHVI, LRPE…YVLI, AVVT…AALV, LVGT…TVVF, FGFL…FIML, PAWR…FLMF, GLFA…PSVL, MAFL…GWWY, IDGI…YAAW, and LIRA…VFVA.

Belongs to the emb family.

Its subcellular location is the cell membrane. Arabinosyl transferase responsible for the polymerization of arabinose into the arabinan of arabinogalactan. This Mycobacterium bovis (strain ATCC BAA-935 / AF2122/97) protein is Probable arabinosyltransferase B (embB).